Here is a 297-residue protein sequence, read N- to C-terminus: Lipoyl synthase (297 aa).

Residues C34, C39, C45, C60, C64, C67, and S273 each coordinate [4Fe-4S] cluster. The region spanning 46-262 (WNKRHATVMI…KYVAYSKGFL (217 aa)) is the Radical SAM core domain.

Belongs to the radical SAM superfamily. Lipoyl synthase family. [4Fe-4S] cluster serves as cofactor.

Its subcellular location is the cytoplasm. It carries out the reaction [[Fe-S] cluster scaffold protein carrying a second [4Fe-4S](2+) cluster] + N(6)-octanoyl-L-lysyl-[protein] + 2 oxidized [2Fe-2S]-[ferredoxin] + 2 S-adenosyl-L-methionine + 4 H(+) = [[Fe-S] cluster scaffold protein] + N(6)-[(R)-dihydrolipoyl]-L-lysyl-[protein] + 4 Fe(3+) + 2 hydrogen sulfide + 2 5'-deoxyadenosine + 2 L-methionine + 2 reduced [2Fe-2S]-[ferredoxin]. It participates in protein modification; protein lipoylation via endogenous pathway; protein N(6)-(lipoyl)lysine from octanoyl-[acyl-carrier-protein]: step 2/2. In terms of biological role, catalyzes the radical-mediated insertion of two sulfur atoms into the C-6 and C-8 positions of the octanoyl moiety bound to the lipoyl domains of lipoate-dependent enzymes, thereby converting the octanoylated domains into lipoylated derivatives. This chain is Lipoyl synthase, found in Ehrlichia chaffeensis (strain ATCC CRL-10679 / Arkansas).